Consider the following 308-residue polypeptide: Lysophosphatidic acid receptor 6 (308 aa).

The Extracellular segment spans residues M1–L16. Residue N5 is glycosylated (N-linked (GlcNAc...) asparagine). A helical transmembrane segment spans residues Y17–L43. The Cytoplasmic segment spans residues K44–Y52. A helical membrane pass occupies residues M53–V76. Residues R77–S89 are Extracellular-facing. Cysteines 86 and 165 form a disulfide. The chain crosses the membrane as a helical span at residues V90–V109. Residues D110–A130 are Cytoplasmic-facing. The chain crosses the membrane as a helical span at residues R131–F151. Residues Q152 to L178 are Extracellular-facing. A helical membrane pass occupies residues S179–R206. Over T207–V224 the chain is Cytoplasmic. Residues L225 to S250 traverse the membrane as a helical segment. Residues L251–M269 lie on the Extracellular side of the membrane. A helical transmembrane segment spans residues Y270–Y289. C281 carries the S-palmitoyl cysteine lipid modification. The Cytoplasmic portion of the chain corresponds to F290–T308.

This sequence belongs to the G-protein coupled receptor 1 family. In terms of tissue distribution, induced in activated T-cells.

Its subcellular location is the cell membrane. Binds to oleoyl-L-alpha-lysophosphatidic acid (LPA). Intracellular cAMP is involved in the receptor activation. This is Lysophosphatidic acid receptor 6 (LPAR6) from Gallus gallus (Chicken).